A 72-amino-acid chain; its full sequence is MNLGLAIFLIIIALLVGATAGFYGARAYMKKYFKENPPISEEMIVAMMSQMGQKPSNKKVHQVMNMMKHQQK.

A helical transmembrane segment spans residues 3 to 23 (LGLAIFLIIIALLVGATAGFY).

This sequence belongs to the UPF0154 family.

The protein resides in the cell membrane. The chain is UPF0154 protein LBA1278 from Lactobacillus acidophilus (strain ATCC 700396 / NCK56 / N2 / NCFM).